The sequence spans 325 residues: DNA-directed RNA polymerase subunit alpha (325 aa).

The segment at M1–E231 is alpha N-terminal domain (alpha-NTD). The segment at I246 to K325 is alpha C-terminal domain (alpha-CTD).

This sequence belongs to the RNA polymerase alpha chain family. As to quaternary structure, homodimer. The RNAP catalytic core consists of 2 alpha, 1 beta, 1 beta' and 1 omega subunit. When a sigma factor is associated with the core the holoenzyme is formed, which can initiate transcription.

It catalyses the reaction RNA(n) + a ribonucleoside 5'-triphosphate = RNA(n+1) + diphosphate. DNA-dependent RNA polymerase catalyzes the transcription of DNA into RNA using the four ribonucleoside triphosphates as substrates. The polypeptide is DNA-directed RNA polymerase subunit alpha (Paraburkholderia phymatum (strain DSM 17167 / CIP 108236 / LMG 21445 / STM815) (Burkholderia phymatum)).